The sequence spans 92 residues: Small ribosomal subunit protein uS19 (92 aa).

Protein S19 forms a complex with S13 that binds strongly to the 16S ribosomal RNA. The polypeptide is Small ribosomal subunit protein uS19 (Rhodopseudomonas palustris (strain ATCC BAA-98 / CGA009)).